Reading from the N-terminus, the 671-residue chain is DNA ligase (671 aa).

Residues 32–36 (DAEYD), 81–82 (SL), and E113 each bind NAD(+). Residue K115 is the N6-AMP-lysine intermediate of the active site. Residues R136, E173, K290, and K314 each coordinate NAD(+). The Zn(2+) site is built by C408, C411, C426, and C432. A BRCT domain is found at 593-671 (EIDSPFAGKT…EAEMLRLLGS (79 aa)).

The protein belongs to the NAD-dependent DNA ligase family. LigA subfamily. Requires Mg(2+) as cofactor. The cofactor is Mn(2+).

The catalysed reaction is NAD(+) + (deoxyribonucleotide)n-3'-hydroxyl + 5'-phospho-(deoxyribonucleotide)m = (deoxyribonucleotide)n+m + AMP + beta-nicotinamide D-nucleotide.. In terms of biological role, DNA ligase that catalyzes the formation of phosphodiester linkages between 5'-phosphoryl and 3'-hydroxyl groups in double-stranded DNA using NAD as a coenzyme and as the energy source for the reaction. It is essential for DNA replication and repair of damaged DNA. In Escherichia coli (strain SE11), this protein is DNA ligase.